The chain runs to 919 residues: MTAPWRRLRSLVWEYWAGLLVCAFWIPDSRGMPHVIRIGGIFEYADGPNAQVMNAEEHAFRFSANIINRNRTLLPNTTLTYDIQRIHFHDSFEATKKACDQLALGVVAIFGPSQGSCTNAVQSICNALEVPHIQLRWKHHPLDNKDTFYVNLYPDYASLSHAILDLVQYLKWRSATVVYDDSTGLIRLQELIMAPSRYNIRLKIRQLPIDSDDSRPLLKEMKRGREFRIIFDCSHTMAAQILKQAMAMGMMTEYYHFIFTTLDLYALDLEPYRYSGVNLTGFRILNVDNPHVSAIVEKWSMERLQAAPRSESGLLDGVMMTDAALLYDAVHIVSVCYQRAPQMTVNSLQCHRHKAWRFGGRFMNFIKEAQWEGLTGRIVFNKTSGLRTDFDLDIISLKEDGLEKVGVWSPADGLNITEVAKGRGPNVTDSLTNRSLIVTTVLEEPFVMFRKSDRTLYGNDRFEGYCIDLLKELAHILGFSYEIRLVEDGKYGAQDDKGQWNGMVKELIDHKADLAVAPLTITHVREKAIDFSKPFMTLGVSILYRKPNGTNPSVFSFLNPLSPDIWMYVLLAYLGVSCVLFVIARFSPYEWYDAHPCNPGSEVVENNFTLLNSFWFGMGSLMQQGSELMPKALSTRIIGGIWWFFTLIIISSYTANLAAFLTVERMESPIDSADDLAKQTKIEYGAVKDGATMTFFKKSKISTFEKMWAFMSSKPSALVKNNEEGIQRALTADYALLMESTTIEYVTQRNCNLTQIGGLIDSKGYGIGTPMGSPYRDKITIAILQLQEEDKLHIMKEKWWRGSGCPEEENKEASALGIQKIGGIFIVLAAGLVLSVLVAVGEFVYKLRKTAEREQRSFCSTVADEIRFSLTCQRRVKHKPQPPMMVKTDAVINMHTFNDRRLPGKDSMACSTSLAPVFP.

Positions M1 to G31 are cleaved as a signal peptide. The Extracellular segment spans residues M32–P563. 7 N-linked (GlcNAc...) asparagine glycosylation sites follow: N70, N76, N278, N381, N415, N426, and N433. Cysteines 99 and 350 form a disulfide. L-glutamate contacts are provided by P518, T520, and R525. 2 N-linked (GlcNAc...) asparagine glycosylation sites follow: N548 and N551. Residues D564–A584 traverse the membrane as a helical segment. Residues R585–R636 are Cytoplasmic-facing. The helical transmembrane segment at I637 to L657 threads the bilayer. The Extracellular segment spans residues A658–K820. L-glutamate is bound by residues A691, T692, and E739. N752 carries N-linked (GlcNAc...) asparagine glycosylation. The helical transmembrane segment at I821–G841 threads the bilayer. Topologically, residues E842 to P919 are cytoplasmic. At S869 the chain carries Phosphoserine. K887 participates in a covalent cross-link: Glycyl lysine isopeptide (Lys-Gly) (interchain with G-Cter in SUMO1).

It belongs to the glutamate-gated ion channel (TC 1.A.10.1) family. GRIK3 subfamily. In terms of assembly, homotetramer, and heterotetramer with either GRIK4 or GRIK5. Can form functional heteromeric receptors with GRIK2. Interacts with PRKCABP. Interacts with NETO2.

It localises to the cell membrane. The protein resides in the postsynaptic cell membrane. It catalyses the reaction Ca(2+)(in) = Ca(2+)(out). Its function is as follows. Ionotropic glutamate receptor that functions as a cation-permeable ligand-gated ion channel, gated by L-glutamate and the glutamatergic agonist kainic acid. Binding of the excitatory neurotransmitter L-glutamate induces a conformation change, leading to the opening of the cation channel, and thereby converts the chemical signal to an electrical impulse. The receptor then desensitizes rapidly and enters a transient inactive state, characterized by the presence of bound agonist. In association with GRIK2, involved in presynaptic facilitation of glutamate release at hippocampal mossy fiber synapses. The chain is Glutamate receptor ionotropic, kainate 3 (GRIK3) from Homo sapiens (Human).